A 430-amino-acid polypeptide reads, in one-letter code: Enolase (430 aa).

Gln-167 provides a ligand contact to (2R)-2-phosphoglycerate. Glu-209 acts as the Proton donor in catalysis. Positions 246, 287, and 314 each coordinate Mg(2+). Lys-339, Arg-368, Ser-369, and Lys-390 together coordinate (2R)-2-phosphoglycerate. Residue Lys-339 is the Proton acceptor of the active site.

This sequence belongs to the enolase family. Mg(2+) serves as cofactor.

The protein resides in the cytoplasm. The protein localises to the secreted. It localises to the cell surface. The catalysed reaction is (2R)-2-phosphoglycerate = phosphoenolpyruvate + H2O. Its pathway is carbohydrate degradation; glycolysis; pyruvate from D-glyceraldehyde 3-phosphate: step 4/5. Functionally, catalyzes the reversible conversion of 2-phosphoglycerate (2-PG) into phosphoenolpyruvate (PEP). It is essential for the degradation of carbohydrates via glycolysis. The sequence is that of Enolase from Prochlorococcus marinus (strain AS9601).